The following is a 775-amino-acid chain: Endothelin-converting enzyme-like 1 (775 aa).

At 1–61 (MEAPYSMTAH…LPRWNRREVC (61 aa)) the chain is on the cytoplasmic side. Residues 30-52 (GTSLPPGFPRGSGRSASGSRSGL) are disordered. Positions 32–52 (SLPPGFPRGSGRSASGSRSGL) are enriched in low complexity. Residues 62–82 (LLSGLVFAAGLCAILAAMLAL) traverse the membrane as a helical; Signal-anchor for type II membrane protein segment. Topologically, residues 83–775 (KYLGPGAAGG…MNPVHKCSVW (693 aa)) are lumenal. In terms of domain architecture, Peptidase M13 spans 99–775 (GCPERKAFAR…MNPVHKCSVW (677 aa)). Cystine bridges form between Cys-124–Cys-760, Cys-132–Cys-720, Cys-188–Cys-441, and Cys-649–Cys-772. Asn-255 and Asn-322 each carry an N-linked (GlcNAc...) asparagine glycan. Residue His-612 participates in Zn(2+) binding. The active site involves Glu-613. His-616 contacts Zn(2+). An N-linked (GlcNAc...) asparagine glycan is attached at Asn-656. Glu-672 provides a ligand contact to Zn(2+). Catalysis depends on Asp-676, which acts as the Proton donor.

The protein belongs to the peptidase M13 family. The cofactor is Zn(2+).

It localises to the membrane. May contribute to the degradation of peptide hormones and be involved in the inactivation of neuronal peptides. The protein is Endothelin-converting enzyme-like 1 (Ecel1) of Mus musculus (Mouse).